A 407-amino-acid chain; its full sequence is Probable beta-1,3-galactosyltransferase 4 (407 aa).

The chain crosses the membrane as a helical; Signal-anchor for type II membrane protein span at residues 23–39 (WTLFLCIGFFCAGILFS).

It belongs to the glycosyltransferase 31 family. The cofactor is Mn(2+).

It is found in the golgi apparatus membrane. Its pathway is protein modification; protein glycosylation. Its function is as follows. Beta-1,3-galactosyltransferase that transfers galactose from UDP-galactose to substrates with a terminal glycosyl residue. This Arabidopsis thaliana (Mouse-ear cress) protein is Probable beta-1,3-galactosyltransferase 4 (B3GALT4).